We begin with the raw amino-acid sequence, 159 residues long: Ribosomal RNA large subunit methyltransferase H (159 aa).

S-adenosyl-L-methionine contacts are provided by residues leucine 76, glycine 108, and 127-132; that span reads FGLLTL.

The protein belongs to the RNA methyltransferase RlmH family. In terms of assembly, homodimer.

It localises to the cytoplasm. The enzyme catalyses pseudouridine(1915) in 23S rRNA + S-adenosyl-L-methionine = N(3)-methylpseudouridine(1915) in 23S rRNA + S-adenosyl-L-homocysteine + H(+). Functionally, specifically methylates the pseudouridine at position 1915 (m3Psi1915) in 23S rRNA. The polypeptide is Ribosomal RNA large subunit methyltransferase H (Streptococcus pyogenes serotype M6 (strain ATCC BAA-946 / MGAS10394)).